The following is a 499-amino-acid chain: uncharacterized protein (499 aa).

Disordered regions lie at residues 76–118 and 208–268; these read QATA…RLSP and DFET…DWAN. Residues 87–104 are compositionally biased toward basic and acidic residues; sequence DPEKQTGKSRYHPSEEIR. The span at 208 to 263 shows a compositional bias: acidic residues; the sequence is DFETEDDESGDDDSEDTGEDEDEEEWVAILEDEDEDDDDDDDDDEDDDDSDSDESL. At S355 the chain carries Phosphoserine. The interval 478 to 499 is disordered; that stretch reads AEGQIRKLLFPKTNQSTQPKPK. The segment covering 489–499 has biased composition (polar residues); that stretch reads KTNQSTQPKPK.

This is an uncharacterized protein from Arabidopsis thaliana (Mouse-ear cress).